The sequence spans 187 residues: UPF0301 protein HSM_1900 (187 aa).

Belongs to the UPF0301 (AlgH) family.

This is UPF0301 protein HSM_1900 from Histophilus somni (strain 2336) (Haemophilus somnus).